Reading from the N-terminus, the 103-residue chain is SLC35A4 upstream open reading frame protein (103 aa).

Residues 62–84 (ASAVLGFAVGTCTGIYAAQAYAV) form a helical membrane-spanning segment.

Its subcellular location is the mitochondrion inner membrane. Functionally, required to maintain cellular respiration. The polypeptide is SLC35A4 upstream open reading frame protein (Homo sapiens (Human)).